The sequence spans 223 residues: Phosphoribosylformylglycinamidine synthase subunit PurQ (223 aa).

The Glutamine amidotransferase type-1 domain maps to 3-223 (FAVLVFPGSN…MVKSWREQNV (221 aa)). Catalysis depends on Cys85, which acts as the Nucleophile. Residues His193 and Glu195 contribute to the active site.

Part of the FGAM synthase complex composed of 1 PurL, 1 PurQ and 2 PurS subunits.

Its subcellular location is the cytoplasm. It carries out the reaction N(2)-formyl-N(1)-(5-phospho-beta-D-ribosyl)glycinamide + L-glutamine + ATP + H2O = 2-formamido-N(1)-(5-O-phospho-beta-D-ribosyl)acetamidine + L-glutamate + ADP + phosphate + H(+). The enzyme catalyses L-glutamine + H2O = L-glutamate + NH4(+). It participates in purine metabolism; IMP biosynthesis via de novo pathway; 5-amino-1-(5-phospho-D-ribosyl)imidazole from N(2)-formyl-N(1)-(5-phospho-D-ribosyl)glycinamide: step 1/2. Functionally, part of the phosphoribosylformylglycinamidine synthase complex involved in the purines biosynthetic pathway. Catalyzes the ATP-dependent conversion of formylglycinamide ribonucleotide (FGAR) and glutamine to yield formylglycinamidine ribonucleotide (FGAM) and glutamate. The FGAM synthase complex is composed of three subunits. PurQ produces an ammonia molecule by converting glutamine to glutamate. PurL transfers the ammonia molecule to FGAR to form FGAM in an ATP-dependent manner. PurS interacts with PurQ and PurL and is thought to assist in the transfer of the ammonia molecule from PurQ to PurL. In Staphylococcus epidermidis (strain ATCC 35984 / DSM 28319 / BCRC 17069 / CCUG 31568 / BM 3577 / RP62A), this protein is Phosphoribosylformylglycinamidine synthase subunit PurQ.